The chain runs to 154 residues: Putative NADPH-dependent 7-cyano-7-deazaguanine reductase (154 aa).

Catalysis depends on aspartate 52, which acts as the Proton donor. Residues 67–69 (VES) and 86–87 (HE) contribute to the substrate site.

It belongs to the GTP cyclohydrolase I family. QueF type 1 subfamily.

It is found in the cytoplasm. The catalysed reaction is 7-aminomethyl-7-carbaguanine + 2 NADP(+) = 7-cyano-7-deazaguanine + 2 NADPH + 3 H(+). The protein operates within tRNA modification; tRNA-queuosine biosynthesis. In terms of biological role, catalyzes the NADPH-dependent reduction of 7-cyano-7-deazaguanine (preQ0) to 7-aminomethyl-7-deazaguanine (preQ1). The protein is Putative NADPH-dependent 7-cyano-7-deazaguanine reductase of Streptococcus pneumoniae (strain ATCC BAA-255 / R6).